Reading from the N-terminus, the 1041-residue chain is MIFFNFKLNRMICPIFFLYIINVLFTQYFIKCEGNKVTVISHNNGHNDNLDVNKNGVISQENVFDTSESLNLPSNKKVGSDDLNTTTISFTVPDNLENEVKVVSSSESGKGATVSHTKVTSEGLSDTQPNVTQSVSSSTHTPGSLDSTMSTEQHSSVSQSSLPTESSSETLNKATVPEIPIQINSGLLKNYNGVKVTGSCGSYFRVYLVPHILIYALTKYSVIQLESLFNDNARIDVEHKGELQNKCSEGYHFKLVVYITHNVLNLKWKTYKPNEESKSEDSDVRKYRIPKLERPFTSIQVYTANSKAGVIETKNYNIRTDIPDTCDAIATDCFLNGNVNIEKCFQCTLLVQKKDKSHECFKYVSSEMKKKMNEIKVKAQDDFNPNEYKLIESIDNILSKIYKKANKPFEISKDLINLEDLDYQFKNELLEYCKLLKKVDTSGTLEEYELGNAEDIYNNLTRLLKSHSDENIVTLQGKLRNTAICIKNVDEWILNKRGLTLPSESPSESSSKSDSYLNTFNDKDKNEDKDDMSKNSKEEFKNDDKENSDDQNNNDSNKKDDENNINNGDTNYVYDFDDDDYDNNSYEKDMYESPIKENKNGVIDLEKYGNQIKLKSPYFKNSKYCNYEYCNRWRDKTSCISQIEVEEQGNCGLCWIFASKLHFETIRCMRGYGHFRSSALYVANCSKRKPIDRCEEGSNPLEFLRILDEKKFLPLESNYPYSYTSAGNSCPKLPNSWTNLWGDTKLLFNKKVHRYIGNKGFISHETSYFKNNMDLFIDMVKREVQNKGSVIIYIKTQDVIGYDFNGKGVHSMCGDRTPDHAANIIGYGNYINKKGEKRSYWLIRNSWSYYWGDEGNFRVDMLGPKNCLYNFIHTVVFFKLDLGTIHVPKKKSWKKNVYFLRHNTDFMYSLYYNNYEPETSQDFESENDYDNAFVHGQSDESDETNKEGKNVHNSVEKKIQILHILKHIKDSQIKRGLVKYDNINETKDEHTCSRVNSQDAEKYEECKKFCLTKWNECKDHYSPGYCLTDLYKGEDCNFCYV.

Residues 1–34 (MIFFNFKLNRMICPIFFLYIINVLFTQYFIKCEG) form the signal peptide. N-linked (GlcNAc...) asparagine glycosylation occurs at Asn84. A compositionally biased stretch (low complexity) spans 101–111 (KVVSSSESGKG). The segment at 101–173 (KVVSSSESGK…TESSSETLNK (73 aa)) is disordered. The segment covering 114–149 (VSHTKVTSEGLSDTQPNVTQSVSSSTHTPGSLDSTM) has biased composition (polar residues). Asn130 is a glycosylation site (N-linked (GlcNAc...) asparagine). Low complexity predominate over residues 150-168 (STEQHSSVSQSSLPTESSS). N-linked (GlcNAc...) asparagine glycosylation is present at Asn459. The interval 500 to 577 (TLPSESPSES…GDTNYVYDFD (78 aa)) is disordered. Over residues 502–515 (PSESPSESSSKSDS) the composition is skewed to low complexity. Residues 521 to 545 (NDKDKNEDKDDMSKNSKEEFKNDDK) are compositionally biased toward basic and acidic residues. Residue Asn554 is glycosylated (N-linked (GlcNAc...) asparagine). Low complexity predominate over residues 564–574 (NINNGDTNYVY). Asn583 carries an N-linked (GlcNAc...) asparagine glycan. Cys654 is an active-site residue. N-linked (GlcNAc...) asparagine glycosylation is present at Asn684. Active-site residues include His820 and Asn845. Asn984 carries N-linked (GlcNAc...) asparagine glycosylation.

The protein belongs to the peptidase C1 family. Just prior to merozoite egress from host erythrocytes, proteolytically cleaved by SUB1 to generate the active 75kDa form.

It localises to the parasitophorous vacuole lumen. The protein localises to the parasitophorous vacuole membrane. In terms of biological role, cysteine protease which plays an essential role in merozoite egress from host erythrocytes. May cleave host SPTB/beta spectrin and ANK1/ankyrin-1 which disrupts host erythrocyte actin cytoskeleton and leads to host erythrocyte cell membrane rupture. This Plasmodium falciparum protein is Serine-repeat antigen protein 6.